Reading from the N-terminus, the 686-residue chain is Leucine-rich repeat-containing protein 49 (686 aa).

LRR repeat units follow at residues 113–134 (HLRL…SNLQ), 135–156 (KLIS…STLR), 157–178 (CLRV…ENLK), 179–200 (SLDV…NHLC), 201–222 (ELRV…NGLD), 223–244 (SLTE…DNLP), and 245–266 (CLQH…SCLA). An LRRCT domain is found at 279 to 317 (NPIAQESWYKHTVLQNMMQLRQLDMKRITEEERRMASVL). The stretch at 303 to 341 (MKRITEEERRMASVLAKKEEEKKRESHKQSLLKEKKRLT) forms a coiled coil. Residues 360–388 (ATNEDRKDSDSPQDPCQIDGSTLSAFPEE) are disordered.

Part of the neuronal tubulin polyglutamylase complex which contains TPGS1, TPGS2, TTLL1, LRRC49 and NICN1. Interacts with PCM1; TTLL1, TPGS1, TPGS2 and LRRC49.

Its subcellular location is the cytoplasm. The protein resides in the cytoskeleton. It localises to the microtubule organizing center. It is found in the centrosome. The protein localises to the centriolar satellite. In terms of biological role, subunit of the tubulin polyglutamylase complex (TPGC). The complex mediates cilia and flagella polyglutamylation which is essential for their biogenesis and motility. The chain is Leucine-rich repeat-containing protein 49 from Homo sapiens (Human).